A 281-amino-acid chain; its full sequence is NAC domain-containing protein 6 (281 aa).

In terms of domain architecture, NAC spans 4-156 (LPVGSRFCPT…QDALTGFADQ (153 aa)). Disordered regions lie at residues 84-109 (GGSEGGTWRSNDGKKEIKDGHMQKGD) and 211-249 (LEGHEDREQPEEAELTVTQQQQQQQQQQQRQEDCDVTQE). Basic and acidic residues predominate over residues 94–109 (NDGKKEIKDGHMQKGD). A DNA-binding region spans residues 109 to 162 (DGLRASDDLQKVVLCRIRYKKEANVNEFGLVNHQAHQTQDALTGFADQLEMMLE). Low complexity predominate over residues 229–239 (QQQQQQQQQQQ).

The protein localises to the nucleus. This is NAC domain-containing protein 6 (NAC006) from Arabidopsis thaliana (Mouse-ear cress).